Reading from the N-terminus, the 362-residue chain is Probable endopolygalacturonase II (362 aa).

Positions 1 to 20 (MHSFASLLAYGLAAGATLAS) are cleaved as a signal peptide. Residues 21–27 (ASPIEAR) constitute a propeptide that is removed on maturation. A disulfide bridge connects residues cysteine 30 and cysteine 45. The PbH1 1 repeat unit spans residues 156–186 (SDDITLTDITINNADGDSLGGHNTDAFDVGN). The Proton donor role is filled by aspartate 201. Cysteine 203 and cysteine 219 are disulfide-bonded. PbH1 repeat units follow at residues 209–229 (GENI…SIGS), 238–259 (VKNV…RIKT), 267–289 (VSEI…VIQQ), and 301–322 (TNGV…DSKA). Histidine 223 is an active-site residue. N-linked (GlcNAc...) asparagine glycosylation occurs at asparagine 240. Cystine bridges form between cysteine 329–cysteine 334 and cysteine 353–cysteine 362.

It belongs to the glycosyl hydrolase 28 family.

Its subcellular location is the secreted. It catalyses the reaction (1,4-alpha-D-galacturonosyl)n+m + H2O = (1,4-alpha-D-galacturonosyl)n + (1,4-alpha-D-galacturonosyl)m.. Its function is as follows. Involved in maceration and soft-rotting of plant tissue. Hydrolyzes the 1,4-alpha glycosidic bonds of de-esterified pectate in the smooth region of the plant cell wall. The sequence is that of Probable endopolygalacturonase II (pgaII) from Aspergillus kawachii (strain NBRC 4308) (White koji mold).